The following is a 377-amino-acid chain: Queuine tRNA-ribosyltransferase (377 aa).

Catalysis depends on D89, which acts as the Proton acceptor. Residues 89 to 93 (DSGGF), D143, Q187, and G214 contribute to the substrate site. The RNA binding stretch occupies residues 245–251 (GVGKPED). Catalysis depends on D264, which acts as the Nucleophile. The segment at 269–273 (TRNAR) is RNA binding; important for wobble base 34 recognition. Residues C302, C304, C307, and H333 each coordinate Zn(2+).

It belongs to the queuine tRNA-ribosyltransferase family. Homodimer. Within each dimer, one monomer is responsible for RNA recognition and catalysis, while the other monomer binds to the replacement base PreQ1. The cofactor is Zn(2+).

The enzyme catalyses 7-aminomethyl-7-carbaguanine + guanosine(34) in tRNA = 7-aminomethyl-7-carbaguanosine(34) in tRNA + guanine. It participates in tRNA modification; tRNA-queuosine biosynthesis. Its function is as follows. Catalyzes the base-exchange of a guanine (G) residue with the queuine precursor 7-aminomethyl-7-deazaguanine (PreQ1) at position 34 (anticodon wobble position) in tRNAs with GU(N) anticodons (tRNA-Asp, -Asn, -His and -Tyr). Catalysis occurs through a double-displacement mechanism. The nucleophile active site attacks the C1' of nucleotide 34 to detach the guanine base from the RNA, forming a covalent enzyme-RNA intermediate. The proton acceptor active site deprotonates the incoming PreQ1, allowing a nucleophilic attack on the C1' of the ribose to form the product. After dissociation, two additional enzymatic reactions on the tRNA convert PreQ1 to queuine (Q), resulting in the hypermodified nucleoside queuosine (7-(((4,5-cis-dihydroxy-2-cyclopenten-1-yl)amino)methyl)-7-deazaguanosine). This Shewanella piezotolerans (strain WP3 / JCM 13877) protein is Queuine tRNA-ribosyltransferase.